Consider the following 289-residue polypeptide: 4-diphosphocytidyl-2-C-methyl-D-erythritol kinase (289 aa).

The active site involves lysine 16. 99–109 (PMGGGLGGGSS) is a binding site for ATP. Residue aspartate 141 is part of the active site.

The protein belongs to the GHMP kinase family. IspE subfamily.

The enzyme catalyses 4-CDP-2-C-methyl-D-erythritol + ATP = 4-CDP-2-C-methyl-D-erythritol 2-phosphate + ADP + H(+). Its pathway is isoprenoid biosynthesis; isopentenyl diphosphate biosynthesis via DXP pathway; isopentenyl diphosphate from 1-deoxy-D-xylulose 5-phosphate: step 3/6. In terms of biological role, catalyzes the phosphorylation of the position 2 hydroxy group of 4-diphosphocytidyl-2C-methyl-D-erythritol. This is 4-diphosphocytidyl-2-C-methyl-D-erythritol kinase from Ralstonia pickettii (strain 12J).